We begin with the raw amino-acid sequence, 137 residues long: Small ribosomal subunit protein uS11 (137 aa).

Disordered regions lie at residues 1-31 (MPPK…AAHI) and 117-137 (TISD…RRRV). A compositionally biased stretch (basic residues) spans 12–21 (KTQKARRRDK).

Belongs to the universal ribosomal protein uS11 family. As to quaternary structure, part of the 30S ribosomal subunit. Interacts with proteins S7 and S18. Binds to IF-3.

Its function is as follows. Located on the platform of the 30S subunit, it bridges several disparate RNA helices of the 16S rRNA. Forms part of the Shine-Dalgarno cleft in the 70S ribosome. This Rhodococcus jostii (strain RHA1) protein is Small ribosomal subunit protein uS11.